The chain runs to 101 residues: Large ribosomal subunit protein uL23 (101 aa).

It belongs to the universal ribosomal protein uL23 family. Part of the 50S ribosomal subunit. Contacts protein L29, and trigger factor when it is bound to the ribosome.

Functionally, one of the early assembly proteins it binds 23S rRNA. One of the proteins that surrounds the polypeptide exit tunnel on the outside of the ribosome. Forms the main docking site for trigger factor binding to the ribosome. This Paenarthrobacter aurescens (strain TC1) protein is Large ribosomal subunit protein uL23.